A 183-amino-acid chain; its full sequence is ATP synthase subunit b, chloroplastic (183 aa).

Residues 27–49 form a helical membrane-spanning segment; that stretch reads LATNLINLTVVVGVLIFFGKGVL.

Belongs to the ATPase B chain family. F-type ATPases have 2 components, F(1) - the catalytic core - and F(0) - the membrane proton channel. F(1) has five subunits: alpha(3), beta(3), gamma(1), delta(1), epsilon(1). F(0) has four main subunits: a(1), b(1), b'(1) and c(10-14). The alpha and beta chains form an alternating ring which encloses part of the gamma chain. F(1) is attached to F(0) by a central stalk formed by the gamma and epsilon chains, while a peripheral stalk is formed by the delta, b and b' chains.

Its subcellular location is the plastid. It localises to the chloroplast thylakoid membrane. F(1)F(0) ATP synthase produces ATP from ADP in the presence of a proton or sodium gradient. F-type ATPases consist of two structural domains, F(1) containing the extramembraneous catalytic core and F(0) containing the membrane proton channel, linked together by a central stalk and a peripheral stalk. During catalysis, ATP synthesis in the catalytic domain of F(1) is coupled via a rotary mechanism of the central stalk subunits to proton translocation. Its function is as follows. Component of the F(0) channel, it forms part of the peripheral stalk, linking F(1) to F(0). This chain is ATP synthase subunit b, chloroplastic, found in Brachypodium distachyon (Purple false brome).